The sequence spans 299 residues: MWFKNLKIYRLSAPWALNGDQLEECLARFAYQGGNNLEMQSLGWISPRENGLLAHTLNGQILLTLRAEKKLLPTTVVNQVAKARAQEIEEQQGYKPGRKQMKEIKERVTDELLPKAFSIYRDTRVWIDTVNHWLVIDAAASAKADEVIGLLAKTIDPLPLDNLYVEQSPAAAMTGWLAADEAPANFSIDQDTELRASGESRAAIRYVKHSIDVDDVRRHIQSGKQCTRLAMTWADRVSFVLTESLDVKRVAPLDVLKENPDAATQNDDEKFDSDMTLMTGEVAKLLAELVDSLGGEKRV.

Belongs to the RdgC family.

It localises to the cytoplasm. It is found in the nucleoid. Functionally, may be involved in recombination. The polypeptide is Recombination-associated protein RdgC (Bordetella parapertussis (strain 12822 / ATCC BAA-587 / NCTC 13253)).